The primary structure comprises 732 residues: Acylamino-acid-releasing enzyme (732 aa).

N-acetylmethionine is present on M1. S187 is modified (phosphoserine). Residues S587, D675, and H707 each act as charge relay system in the active site.

The protein belongs to the peptidase S9C family. In terms of assembly, homotetramer. In terms of tissue distribution, expressed in the liver (at protein level).

It localises to the cytoplasm. It catalyses the reaction Cleavage of an N-acetyl or N-formyl amino acid from the N-terminus of a polypeptide.. Its activity is regulated as follows. Homotetramerization is required for activity. Tetramerization results in the formation of a gated channel which is involved in substrate selection and substrate access to the catalytic sites. Functionally, this enzyme catalyzes the hydrolysis of the N-terminal peptide bond of an N-acetylated peptide to generate an N-acetylated amino acid and a peptide with a free N-terminus. It preferentially cleaves off Ac-Ala, Ac-Met and Ac-Ser. Also, involved in the degradation of oxidized and glycated proteins. The protein is Acylamino-acid-releasing enzyme (APEH) of Sus scrofa (Pig).